Reading from the N-terminus, the 381-residue chain is MSQQPIRYEFIKACKQTGARLGRVHTPHGSFETPVFMPVGTLATVKTMSPEELKEMGADIILSNTYHLWLRPGHDIVKEAGGLHQFMNWNRAILTDSGGFQVFSLSEFRKIEEEGVHFRNHLNGDKLFLSPEKAMEIQNALGSDIMMAFDECPPYPAEYDYMKKSVERTSRWAERCLKAHNRPDEQGLFGIVQGGEYENLRKQSAKDLISLDFPGYAIGGLSVGEPKDVMNRVLEFTTPLLPADKPRYLMGVGSPDSLIDGAIRGVDMFDCVLPTRIARNGTLMTSEGRLVVKNAKYERDFRPIDEQCDCYTCRNYSRAYIRHLIRCNETFGIRLTSYHNLYFLLKLMGQVRDAIREDRLGDFREEFFERYGFNKPNAKSF.

Aspartate 96 acts as the Proton acceptor in catalysis. Substrate contacts are provided by residues 96–100 (DSGGF), aspartate 150, glutamine 193, and glycine 220. Residues 251-257 (GVGSPDS) are RNA binding. Aspartate 270 (nucleophile) is an active-site residue. The interval 275–279 (TRIAR) is RNA binding; important for wobble base 34 recognition. Residues cysteine 308, cysteine 310, cysteine 313, and histidine 339 each contribute to the Zn(2+) site.

Belongs to the queuine tRNA-ribosyltransferase family. As to quaternary structure, homodimer. Within each dimer, one monomer is responsible for RNA recognition and catalysis, while the other monomer binds to the replacement base PreQ1. The cofactor is Zn(2+).

The enzyme catalyses 7-aminomethyl-7-carbaguanine + guanosine(34) in tRNA = 7-aminomethyl-7-carbaguanosine(34) in tRNA + guanine. The protein operates within tRNA modification; tRNA-queuosine biosynthesis. In terms of biological role, catalyzes the base-exchange of a guanine (G) residue with the queuine precursor 7-aminomethyl-7-deazaguanine (PreQ1) at position 34 (anticodon wobble position) in tRNAs with GU(N) anticodons (tRNA-Asp, -Asn, -His and -Tyr). Catalysis occurs through a double-displacement mechanism. The nucleophile active site attacks the C1' of nucleotide 34 to detach the guanine base from the RNA, forming a covalent enzyme-RNA intermediate. The proton acceptor active site deprotonates the incoming PreQ1, allowing a nucleophilic attack on the C1' of the ribose to form the product. After dissociation, two additional enzymatic reactions on the tRNA convert PreQ1 to queuine (Q), resulting in the hypermodified nucleoside queuosine (7-(((4,5-cis-dihydroxy-2-cyclopenten-1-yl)amino)methyl)-7-deazaguanosine). The chain is Queuine tRNA-ribosyltransferase from Bacillus licheniformis (strain ATCC 14580 / DSM 13 / JCM 2505 / CCUG 7422 / NBRC 12200 / NCIMB 9375 / NCTC 10341 / NRRL NRS-1264 / Gibson 46).